Here is a 584-residue protein sequence, read N- to C-terminus: HERV-H_2q24.3 provirus ancestral Env polyprotein (584 aa).

Positions M1–P35 are cleaved as a signal peptide. Residues L36–V523 are Extracellular-facing. N47 carries N-linked (GlcNAc...) asparagine glycosylation. Residues C64–C67 carry the CXXC motif. N199, N222, N265, N283, N352, and N370 each carry an N-linked (GlcNAc...) asparagine glycan. Positions V388–G408 are fusion peptide. Residues L454–L470 carry the CKS-17 motif. Cysteines 471 and 478 form a disulfide. A CX6CC motif is present at residues C471 to C479. A glycan (N-linked (GlcNAc...) asparagine) is linked at N483. Residues L524 to F544 traverse the membrane as a helical segment. Residues R545 to A584 are Cytoplasmic-facing.

It belongs to the gamma type-C retroviral envelope protein family. HERV class-I H env subfamily. As to quaternary structure, the surface (SU) and transmembrane (TM) proteins form a heterodimer. SU and TM are attached by noncovalent interactions or by a labile interchain disulfide bond. Specific enzymatic cleavages in vivo yield the mature SU and TM proteins. In terms of processing, the CXXC motif is highly conserved across a broad range of retroviral envelope proteins. It is thought to participate in the formation of a labile disulfide bond possibly with the CX6CC motif present in the transmembrane protein. Isomerization of the intersubunit disulfide bond to an SU intrachain disulfide bond is thought to occur upon receptor recognition in order to allow membrane fusion. Low expression in skin and testis. No expression in several cell lines.

It localises to the virion. Its subcellular location is the cell membrane. In terms of biological role, retroviral envelope proteins mediate receptor recognition and membrane fusion during early infection. Endogenous envelope proteins may have kept, lost or modified their original function during evolution. This endogenous envelope protein has lost its original fusogenic properties but has immunosuppressive properties in vivo. SU mediates receptor recognition. Functionally, TM anchors the envelope heterodimer to the viral membrane through one transmembrane domain. The other hydrophobic domain, called fusion peptide, mediates fusion of the viral membrane with the target cell membrane. This chain is HERV-H_2q24.3 provirus ancestral Env polyprotein, found in Homo sapiens (Human).